A 1435-amino-acid polypeptide reads, in one-letter code: Putative ATP-dependent RNA helicase YLR419W (1435 aa).

Disordered stretches follow at residues 1 to 57 (MAKK…STAS) and 226 to 251 (LSSH…KNSH). The residue at position 9 (Ser9) is a Phosphoserine. A compositionally biased stretch (basic and acidic residues) spans 31-43 (KGQEPEPEDDKRA). Residues 45–57 (QQSNRAKVTSTAS) are compositionally biased toward polar residues. Positions 365–406 (PLSTRMIVERLTEIGVSSDEALLALQQNDMNENEAAGFLTRE) constitute a UBA domain. The 102-residue stretch at 430–531 (QELESLESIY…EWLKENISKI (102 aa)) folds into the RWD domain. A disordered region spans residues 543-566 (DSKGAINKRNISNGKRSINNSSSR). Over residues 551 to 566 (RNISNGKRSINNSSSR) the composition is skewed to polar residues. The 169-residue stretch at 614–782 (IDIINKNEVV…FPGLATCHIE (169 aa)) folds into the Helicase ATP-binding domain. An ATP-binding site is contributed by 627–634 (GETGSGKS). Residues 729–732 (DEVH) carry the DEAH box motif. Ser816 is subject to Phosphoserine. One can recognise a Helicase C-terminal domain in the interval 845 to 1020 (LLCQVVEYVH…SLYLSVKAMG (176 aa)).

The protein belongs to the DEAD box helicase family. DEAH subfamily.

The protein resides in the cytoplasm. The catalysed reaction is ATP + H2O = ADP + phosphate + H(+). Functionally, probable ATP-binding RNA helicase. The chain is Putative ATP-dependent RNA helicase YLR419W from Saccharomyces cerevisiae (strain ATCC 204508 / S288c) (Baker's yeast).